A 30-amino-acid chain; its full sequence is MPIIGVPRCLENPFCAPAKFPLSVKKKIRI.

This sequence belongs to the UPF0377 family.

This Saccharomyces cerevisiae (strain ATCC 204508 / S288c) (Baker's yeast) protein is Putative UPF0377 protein YNR075C-A.